The primary structure comprises 182 residues: Large ribosomal subunit protein bL17m (182 aa).

Belongs to the bacterial ribosomal protein bL17 family.

It is found in the mitochondrion. The sequence is that of Large ribosomal subunit protein bL17m (mrpl17) from Dictyostelium discoideum (Social amoeba).